The chain runs to 648 residues: Mitochondrial Rho GTPase 3 (648 aa).

Topologically, residues 1 to 621 are cytoplasmic; that stretch reads MWMGVGDSSG…KRSCKLNNRS (621 aa). Serine 11 carries the phosphoserine modification. The 168-residue stretch at 12 to 179 folds into the Miro 1 domain; the sequence is PKPIRIVVVG…LYYAQKAVID (168 aa). EF-hand domains follow at residues 195-230 and 316-351; these read RCIAALKRIFLLSDHNMDGILSDEELNELQKKCFDT and VAIEFLREVYEFFDSNGDNNLEPHEMGYLFETAPES. 9 residues coordinate Ca(2+): aspartate 208, asparagine 210, aspartate 212, glutamate 219, aspartate 329, asparagine 331, aspartate 333, asparagine 335, and glutamate 340. The Miro 2 domain occupies 425 to 599; the sequence is RKVVQCFVFG…FRKILTAAEN (175 aa). The helical transmembrane segment at 622–644 threads the bilayer; sequence LMAVSIGTAVLIAGLASFRLYTA. Topologically, residues 645–648 are mitochondrial intermembrane; sequence RKQS.

This sequence belongs to the mitochondrial Rho GTPase family. As to expression, expressed at very low levels in roots, leaves, stems, flowers and siliques.

The protein localises to the mitochondrion outer membrane. Functionally, mitochondrial GTPase that may be involved in mitochondrion development. This is Mitochondrial Rho GTPase 3 from Arabidopsis thaliana (Mouse-ear cress).